Consider the following 709-residue polypeptide: ATP-dependent zinc metalloprotease YME1 homolog (709 aa).

The segment at 152 to 182 (FTSDTSSTVSSTPSLNHSLQNSMPPSTPTPP) is disordered. Low complexity predominate over residues 153-165 (TSDTSSTVSSTPS). Residues 217-239 (IFKFIAGLSVASYFVLLGMSIFA) traverse the membrane as a helical segment. An ATP-binding site is contributed by 307–314 (GPPGTGKT). Histidine 530 is a binding site for Zn(2+). Glutamate 531 is a catalytic residue. Residues histidine 534 and aspartate 608 each contribute to the Zn(2+) site.

It in the N-terminal section; belongs to the AAA ATPase family. In the C-terminal section; belongs to the peptidase M41 family. Requires Zn(2+) as cofactor.

The protein localises to the mitochondrion membrane. Functionally, putative ATP-dependent protease. The chain is ATP-dependent zinc metalloprotease YME1 homolog from Schizosaccharomyces pombe (strain 972 / ATCC 24843) (Fission yeast).